The chain runs to 724 residues: Probable ATP-dependent RNA helicase DDX4 (724 aa).

Positions 1-246 (MGDEDWEAEI…SDTQGPKVTY (246 aa)) are disordered. Residues 30 to 42 (NGDNFNRTPASSS) show a composition bias toward polar residues. Basic and acidic residues predominate over residues 69–78 (DAGECNKRDN). Residues 150-162 (RGSFRGCRGGFGL) show a composition bias toward gly residues. A compositionally biased stretch (low complexity) spans 195–205 (GDTSQSRSGSG). 2 positions are modified to phosphoserine: Ser222 and Ser226. Residues 228-247 (KSEAEGGESSDTQGPKVTYI) are interaction with RANBP9. The Q motif signature appears at 288–316 (LTFEEANLCQTLNNNIAKAGYTKLTPVQK). Residues 319 to 502 (IPIILAGRDL…AEFLKSNYLF (184 aa)) form the Helicase ATP-binding domain. 332 to 339 (AQTGSGKT) lines the ATP pocket. Positions 446 to 449 (DEAD) match the DEAD box motif. One can recognise a Helicase C-terminal domain in the interval 530-675 (KLVEILRNIG…DVPAWLEEIA (146 aa)). The span at 704-715 (LNTAGFSSSQAP) shows a compositional bias: polar residues. The segment at 704 to 724 (LNTAGFSSSQAPNPVDDESWD) is disordered. The residue at position 722 (Ser722) is a Phosphoserine.

This sequence belongs to the DEAD box helicase family. DDX4/VASA subfamily. As to quaternary structure, found in a mRNP complex, at least composed of TDRD1, TDRD6, TDRD7 and DDX4. Interacts with RANBP9. Interacts with RANBP10. Interacts with PIWIL2 and MAEL. Interacts with BMAL1 and CLOCK. Interacts with Tex19.1 and, probably, Tex19.2. Interacts with RBM46. Expressed only in ovary and testis. Expressed in migratory primordial germ cells in the region of the gonadal ridge in both sexes.

It is found in the cytoplasm. The protein resides in the perinuclear region. The catalysed reaction is ATP + H2O = ADP + phosphate + H(+). In terms of biological role, ATP-dependent RNA helicase required during spermatogenesis. Required to repress transposable elements and preventing their mobilization, which is essential for the germline integrity. Acts via the piRNA metabolic process, which mediates the repression of transposable elements during meiosis by forming complexes composed of piRNAs and Piwi proteins and governs the methylation and subsequent repression of transposons. Involved in the secondary piRNAs metabolic process, the production of piRNAs in fetal male germ cells through a ping-pong amplification cycle. Required for PIWIL2 slicing-triggered piRNA biogenesis: helicase activity enables utilization of one of the slice cleavage fragments generated by PIWIL2 and processing these pre-piRNAs into piRNAs. This Homo sapiens (Human) protein is Probable ATP-dependent RNA helicase DDX4 (DDX4).